The sequence spans 126 residues: Small ribosomal subunit protein eS6 (126 aa).

This sequence belongs to the eukaryotic ribosomal protein eS6 family.

This chain is Small ribosomal subunit protein eS6, found in Methanothermobacter thermautotrophicus (strain ATCC 29096 / DSM 1053 / JCM 10044 / NBRC 100330 / Delta H) (Methanobacterium thermoautotrophicum).